The sequence spans 854 residues: MSGLFFLLSELLILLGKINSVSKKSLCHPELFKIDNKLNWRTSEEMVLTCKAVVNEKCKKSKLQMRWYKDNELLGKKIERGLKMKYRYRKKLKLNDSGNYTCFVFNKNGNSSVFFLINVTEKENFHVNENKILDGSEISNNTLYLHPEMGMENYHVIPNDEIVMQCRFFSPISINLTVSWYQHSCDSNYHNAQLLVKDSKFNISSNKESCQSYLSHIPLDSICLYSWLRFIATSDDQSCITCLIESDNNSIEKTKFTFTVLVDAGHRPHLTFAPSSTVCQGSNFTMKCETNVPRPILYIYKLDPSFNIENPIIHLSNSTLFVNNYNEDSKRSSQSAEVLIKSMDFNYSGRYLCSLAELPLFEIMHLSVIKCSNNFFMNSVPLSIFLVIGFFVAIILLSLIIYCFFLQYKNAVDSRKHFSIRKTVIVEYESPIYKSFINGTKNFKTDVLHTNSLLPDSNPLLPPIIKIKPIKRLSQFRDGNYGEQLPSTSTDRTRLESTRHSQLENEVFECGSGNNSLSLKYGLRKSSSFEFFSLYEFPCDAKWEFPREKLKITNKKLGEGAFGMVYEGIANDIGNRSNPIKVAVKMMRDDFSDSNVHDFVKEMEIMKHIGRHPNVIQLLGLCTQKGPLRVIVELAPYGNLRDFVRAKNKKYSKSKKIIGNFTSSILCTYSLQIARGMTYLASRSVVHRDLSARNILVGEHFEMKIADFGLTRIVDYYYRKKTDGILPVKWMAPEALLEKKYTTKSDVWSYGILLWEIFTLGDSPYSAILPEKVVDLIRKGFQNPKPELANFEIYRLMQHCWSLSSENRPNFFEIVEILIDIIQRIDDEPEENIYHSELNYLKMESDYLEPKCLV.

Residues 1 to 20 (MSGLFFLLSELLILLGKINS) form the signal peptide. Residues 21-383 (VSKKSLCHPE…NFFMNSVPLS (363 aa)) lie on the Extracellular side of the membrane. The Ig-like C2-type 1 domain occupies 29 to 120 (PELFKIDNKL…SSVFFLINVT (92 aa)). Cysteines 50 and 102 form a disulfide. Asn95, Asn99, Asn110, Asn118, Asn140, Asn175, Asn202, Asn248, Asn283, Asn317, and Asn346 each carry an N-linked (GlcNAc...) asparagine glycan. Ig-like C2-type domains lie at 147-259 (PEMG…FTFT) and 268-369 (PHLT…LSVI). Cys166 and Cys242 are joined by a disulfide. Residues Cys288 and Cys353 are joined by a disulfide bond. Residues 384–404 (IFLVIGFFVAIILLSLIIYCF) traverse the membrane as a helical segment. Topologically, residues 405 to 854 (FLQYKNAVDS…SDYLEPKCLV (450 aa)) are cytoplasmic. The Protein kinase domain occupies 551 to 822 (KITNKKLGEG…EIVEILIDII (272 aa)). Residues 557–565 (LGEGAFGMV) and Lys585 each bind ATP. Residue Asp689 is the Proton acceptor of the active site. Position 718 is a phosphotyrosine; by autocatalysis (Tyr718).

It belongs to the protein kinase superfamily. Tyr protein kinase family. Fibroblast growth factor receptor subfamily. Expressed in brain, stem cells and the mesenchymal cells.

It localises to the membrane. It catalyses the reaction L-tyrosyl-[protein] + ATP = O-phospho-L-tyrosyl-[protein] + ADP + H(+). Its function is as follows. Receptor for basic fibroblast growth factor. This chain is Fibroblast growth factor receptor 1 (FGFR1), found in Dugesia japonica (Planarian).